Consider the following 351-residue polypeptide: Rab9 effector protein with kelch motifs (351 aa).

6 Kelch repeats span residues 54–102 (KIVI…PESE), 105–156 (SLWV…TNSA), 162–210 (LFVF…VITA), 214–263 (DIYI…TFNK), 264–313 (NIFI…LLPW), and 328–351 (LCFVFGGMDTQGVIFNDCLVTVLT).

Its function is as follows. Rab9 effector required for endosome to trans-Golgi network (TGN) transport. The sequence is that of Rab9 effector protein with kelch motifs (rabepk) from Danio rerio (Zebrafish).